The chain runs to 465 residues: Pancreatic triacylglycerol lipase (465 aa).

Residues 1–16 (MLMLWTFAVLLGAVAG) form the signal peptide. Disulfide bonds link cysteine 20-cysteine 26 and cysteine 107-cysteine 118. Serine 169 functions as the Nucleophile in the catalytic mechanism. Residue aspartate 193 is the Charge relay system of the active site. Ca(2+)-binding residues include glutamate 204, arginine 207, aspartate 209, and aspartate 212. Cysteine 254 and cysteine 278 are disulfide-bonded. Histidine 280 acts as the Charge relay system in catalysis. 3 disulfide bridges follow: cysteine 302/cysteine 313, cysteine 316/cysteine 321, and cysteine 449/cysteine 465. One can recognise a PLAT domain in the interval 355-465 (WRYQVTVTLS…EDVLLTLSPC (111 aa)).

Belongs to the AB hydrolase superfamily. Lipase family. In terms of assembly, forms a 1:1 stoichiometric complex with (pro)colipase/CLPS. Pancreas.

It localises to the secreted. It catalyses the reaction a triacylglycerol + H2O = a diacylglycerol + a fatty acid + H(+). It carries out the reaction 1,2,3-tri-(9Z-octadecenoyl)-glycerol + H2O = di-(9Z)-octadecenoylglycerol + (9Z)-octadecenoate + H(+). The enzyme catalyses 1,2,3-tributanoylglycerol + H2O = dibutanoylglycerol + butanoate + H(+). The catalysed reaction is all-trans-retinyl hexadecanoate + H2O = all-trans-retinol + hexadecanoate + H(+). It catalyses the reaction 1,2-di-(9Z-octadecenoyl)-glycerol + H2O = (9Z-octadecenoyl)-glycerol + (9Z)-octadecenoate + H(+). Its activity is regulated as follows. Inhibited by bile salts, is reactivated by (pro)colipase/CLPS. Functionally, plays an important role in fat metabolism. It preferentially splits the esters of long-chain fatty acids at positions 1 and 3, producing mainly 2-monoacylglycerol and free fatty acids, and shows considerably higher activity against insoluble emulsified substrates than against soluble ones. In Mus musculus (Mouse), this protein is Pancreatic triacylglycerol lipase.